A 799-amino-acid chain; its full sequence is Protein phosphatase 1 regulatory subunit 3F (799 aa).

The interval 1–30 is disordered; it reads MARTAPVEPPLRHPAPPSPAAGEPRASAEA. Over 1–772 the chain is Cytoplasmic; sequence MARTAPVEPP…LTQTLGVLAG (772 aa). Positions 7-19 are enriched in pro residues; it reads VEPPLRHPAPPSP. At Ser-18 the chain carries Phosphoserine. The span at 20 to 30 shows a compositional bias: low complexity; that stretch reads AAGEPRASAEA. A PP1-binding motif motif is present at residues 36 to 39; that stretch reads RVLF. Disordered stretches follow at residues 53–108, 201–235, 332–353, and 417–439; these read RYRP…PVPA, SPPGAGVGGTGAGDPLLDPGLGLGPGQMSASSPDD, RRRPFEEEPRMRSADDNTLAEH, and ATCGLGGPPRDQASGPDASDRAA. The span at 78–97 shows a compositional bias: acidic residues; that stretch reads ADEEDDGEDGDEGEEEEEAF. Positions 127–283 constitute a CBM21 domain; it reads LERLGRVMVE…NNHGRNYTVL (157 aa). A compositionally biased stretch (basic and acidic residues) spans 334-353; sequence RPFEEEPRMRSADDNTLAEH. Ser-545 carries the post-translational modification Phosphoserine. Disordered regions lie at residues 566–600, 663–688, and 722–743; these read KDTEDPDDEGEGEDGLSITPSSPEGGSPKESPPEI, SKSPGEAGTESQMEELPTERESSWVP, and PHVNSQEEEGGSLNLESPKRSP. Over residues 569–579 the composition is skewed to acidic residues; the sequence is EDPDDEGEGED. The segment covering 585 to 594 has biased composition (low complexity); that stretch reads PSSPEGGSPK. Residues Ser-587 and Ser-592 each carry the phosphoserine modification. Residues 679-688 are compositionally biased toward basic and acidic residues; the sequence is PTERESSWVP. A helical transmembrane segment spans residues 773–793; sequence LVMVPVALNSGVSLLVLVLCL. The Extracellular portion of the chain corresponds to 794–799; the sequence is SLAWFS.

Highly expressed in brain (at protein level).

The protein resides in the membrane. Its function is as follows. Glycogen-targeting subunit for protein phosphatase 1 (PP1). The protein is Protein phosphatase 1 regulatory subunit 3F (Ppp1r3f) of Mus musculus (Mouse).